A 477-amino-acid chain; its full sequence is Endo-1,4-beta-xylanase A (477 aa).

An N-terminal signal peptide occupies residues 1–41 (MGSYALPRSGVRRSIRVLLLALVVGVLGTATALIAPPGAHA). One can recognise a GH10 domain in the interval 42–340 (AESTLGAAAA…KAAYTAVLDA (299 aa)). Glutamate 169 (proton donor) is an active-site residue. The active-site Nucleophile is the glutamate 277. One can recognise a Ricin B-type lectin domain in the interval 361 to 477 (SGRCLDVPDA…NGSNQRWTRT (117 aa)). Intrachain disulfides connect cysteine 364–cysteine 383, cysteine 406–cysteine 423, and cysteine 447–cysteine 466.

The protein belongs to the glycosyl hydrolase 10 (cellulase F) family.

It localises to the secreted. The catalysed reaction is Endohydrolysis of (1-&gt;4)-beta-D-xylosidic linkages in xylans.. It functions in the pathway glycan degradation; xylan degradation. Contributes to hydrolyze hemicellulose, the major component of plant cell-walls. XLNA and XLNB seem to act sequentially on the substrate to yield xylobiose and xylose as carbon sources. The protein is Endo-1,4-beta-xylanase A (xlnA) of Streptomyces lividans.